The following is a 479-amino-acid chain: Lactaldehyde dehydrogenase (479 aa).

L150 lines the NAD(+) pocket. Residue R161 coordinates (S)-lactate. NAD(+) contacts are provided by residues 176 to 179 (KPSE), Q214, and S230. Residue E251 coordinates (S)-lactate. Catalysis depends on residues E251 and C285. N286 lines the (S)-lactate pocket. R336 is a binding site for NAD(+). (S)-lactate contacts are provided by E443 and H449.

Belongs to the aldehyde dehydrogenase family. In terms of assembly, homotetramer.

It catalyses the reaction (S)-lactaldehyde + NAD(+) + H2O = (S)-lactate + NADH + 2 H(+). It carries out the reaction glycolaldehyde + NAD(+) + H2O = glycolate + NADH + 2 H(+). It participates in carbohydrate degradation; L-fucose degradation. The protein operates within carbohydrate degradation; L-rhamnose degradation. Substrate inhibition is very strong with lactaldehyde, diminishing progressively with glycolaldehyde, glyceraldehyde or methylglyoxal. Inhibited by p-hydroxy mercuribenzoate and by some cations, including Mn(2+), Ca(2+), Cu(2+) and Zn(2+). Inhibited by NADH. In terms of biological role, catalyzes the irreversible oxidation of L-lactaldehyde to L-lactate. Also shows high activity with glycolaldehyde and L-glyceraldehyde. Has weaker activity with various aldehydes such as methylglyoxal, propionaldehyde or benzaldehyde. Involved in the degradation of lactaldehyde produced during metabolism of L-fucose and L-rhamnose. It may be involved in several other metabolic pathways. The sequence is that of Lactaldehyde dehydrogenase (aldA) from Escherichia coli (strain K12).